Reading from the N-terminus, the 84-residue chain is Putative antitoxin VapB37 (84 aa).

In terms of biological role, probable antitoxin component of a type II toxin-antitoxin (TA) system. Its putative cognate toxin is VapC37. The chain is Putative antitoxin VapB37 (vapB37) from Mycobacterium tuberculosis (strain CDC 1551 / Oshkosh).